A 602-amino-acid polypeptide reads, in one-letter code: Alpha-glucosides permease MPH3 (602 aa).

The Cytoplasmic portion of the chain corresponds to 1 to 106 (MKNLSFLINR…AAAWSLLVST (106 aa)). Residues 107-127 (TLIMEGYDTAILGAFYALPIF) form a helical membrane-spanning segment. Residues 128–142 (QRKFGSQNDKTGEWE) lie on the Extracellular side of the membrane. A helical membrane pass occupies residues 143-163 (ISASWQIGLTLCYMAGEIVGL). At 164 to 178 (QLTGPSVDLVGNRYT) the chain is on the cytoplasmic side. The helical transmembrane segment at 179 to 199 (LIIALFFLAAFTFILYFCNSL) threads the bilayer. Position 200 (Gly200) is a topological domain, extracellular. Residues 201–221 (MIAVGQALCGMPWGCFQCLTV) form a helical membrane-spanning segment. Over 222 to 234 (SYASEICPLALRY) the chain is Cytoplasmic. Residues 235–255 (YLTTYSNLCWLFGQLFAAGIM) traverse the membrane as a helical segment. The Extracellular portion of the chain corresponds to 256–270 (KNSQKKYADSELGYK). Residues 271–291 (LPFALQWILPVPLALGIFFAP) traverse the membrane as a helical segment. Residues 292–363 (ESPWWLVKKG…EDKINRRRTR (72 aa)) are Cytoplasmic-facing. A helical transmembrane segment spans residues 364–384 (ITCLCWAGQATCGSILIGYST). Topologically, residues 385–397 (YFYEKAGVSTEMS) are extracellular. The chain crosses the membrane as a helical span at residues 398–418 (FTFSIIQYCLGICATFLSWWA). The Cytoplasmic portion of the chain corresponds to 419-426 (SKYFGRYD). Residues 427-447 (LYAFGLAFQTIVFFIIGGLGC) traverse the membrane as a helical segment. At 448–459 (SSTHGSKMGSGS) the chain is on the extracellular side. Residues 460–480 (LLMAVAFFYNLGIAPVVFCLV) form a helical membrane-spanning segment. Over 481 to 492 (SEMPSSRLRTKT) the chain is Cytoplasmic. Residues 493-513 (IILARNTYNVVSIICSVLILY) traverse the membrane as a helical segment. Over 514–525 (QLNSKKWNWGAK) the chain is Extracellular. A helical membrane pass occupies residues 526–546 (SGFFWGVLCFCTLIWAVVDLP). Over 547 to 602 (ETAGKTFVEINELFKLGVSARKFKSTKVDPFVVKTPPKDVSHNDPKGDIEASIAEE) the chain is Cytoplasmic. Positions 582 to 595 (PPKDVSHNDPKGDI) are enriched in basic and acidic residues. The interval 582–602 (PPKDVSHNDPKGDIEASIAEE) is disordered.

It belongs to the major facilitator superfamily. Sugar transporter (TC 2.A.1.1) family.

The protein resides in the cell membrane. Its function is as follows. High-affinity uptake of maltose and maltotriose. Also transports alpha-methylglucoside, glucose and turanose but not melezitose or trehalose. The polypeptide is Alpha-glucosides permease MPH3 (MPH3) (Saccharomyces cerevisiae (strain ATCC 204508 / S288c) (Baker's yeast)).